Consider the following 398-residue polypeptide: Elongation factor Tu (398 aa).

A tr-type G domain is found at 10–207 (KPHVNIGTIG…TVDSYIPEPE (198 aa)). Residues 19 to 26 (GHVDHGKT) form a G1 region. 19-26 (GHVDHGKT) contacts GTP. Threonine 26 serves as a coordination point for Mg(2+). The G2 stretch occupies residues 63-67 (GITIN). The interval 84 to 87 (DAPG) is G3. Residues 84–88 (DAPGH) and 139–142 (NKVD) contribute to the GTP site. The interval 139-142 (NKVD) is G4. The interval 177 to 179 (SAL) is G5.

The protein belongs to the TRAFAC class translation factor GTPase superfamily. Classic translation factor GTPase family. EF-Tu/EF-1A subfamily. In terms of assembly, monomer.

The protein localises to the cytoplasm. The enzyme catalyses GTP + H2O = GDP + phosphate + H(+). Functionally, GTP hydrolase that promotes the GTP-dependent binding of aminoacyl-tRNA to the A-site of ribosomes during protein biosynthesis. The chain is Elongation factor Tu from Streptococcus equi subsp. zooepidemicus (strain MGCS10565).